The primary structure comprises 360 residues: Transcriptional coactivator MYCFIDRAFT_190109 (360 aa).

Residues 3–67 (GMALNQLLAC…GFLHEPRPGQ (65 aa)) form the HTH iclR-type domain. Residues 33–52 (ARDVADLTGVPETQLCRVVR) constitute a DNA-binding region (H-T-H motif).

The protein localises to the nucleus. In terms of biological role, transcriptional coactivator; part of the gene cluster that mediates the biosynthesis of an emodin derivative that may be involved in black Sigatoka disease of banana. With MYCFIDRAFT_198930, coregulates the production of the PKS8-1 cluster product. This Pseudocercospora fijiensis (strain CIRAD86) (Black leaf streak disease fungus) protein is Transcriptional coactivator MYCFIDRAFT_190109.